The following is a 457-amino-acid chain: Phosphoglucosamine mutase (457 aa).

The Phosphoserine intermediate role is filled by Ser106. Mg(2+) is bound by residues Ser106, Asp245, Asp247, and Asp249. Ser106 is modified (phosphoserine).

Belongs to the phosphohexose mutase family. Requires Mg(2+) as cofactor. Activated by phosphorylation.

The enzyme catalyses alpha-D-glucosamine 1-phosphate = D-glucosamine 6-phosphate. In terms of biological role, catalyzes the conversion of glucosamine-6-phosphate to glucosamine-1-phosphate. The polypeptide is Phosphoglucosamine mutase (Methylibium petroleiphilum (strain ATCC BAA-1232 / LMG 22953 / PM1)).